The chain runs to 278 residues: NAD-capped RNA hydrolase NudC (278 aa).

Arginine 84 lines the substrate pocket. Positions 114 and 117 each coordinate Zn(2+). Residue glutamate 127 participates in substrate binding. The Zn(2+) site is built by cysteine 132 and cysteine 135. Tyrosine 140 contacts substrate. Residues 141 to 265 (PRLSPSMIVL…IARHLIDLYL (125 aa)) enclose the Nudix hydrolase domain. Residues alanine 174, glutamate 190, and glutamate 194 each coordinate a divalent metal cation. A Nudix box motif is present at residues 175–196 (GFVEAGESVEQCVVREVREEVG). 208 to 215 (QNWPFPHS) is a binding site for substrate. Residue glutamate 235 coordinates a divalent metal cation. Alanine 257 serves as a coordination point for substrate.

Belongs to the Nudix hydrolase family. NudC subfamily. As to quaternary structure, homodimer. The cofactor is Mg(2+). Requires Mn(2+) as cofactor. Zn(2+) serves as cofactor.

It carries out the reaction a 5'-end NAD(+)-phospho-ribonucleoside in mRNA + H2O = a 5'-end phospho-adenosine-phospho-ribonucleoside in mRNA + beta-nicotinamide D-ribonucleotide + 2 H(+). The catalysed reaction is NAD(+) + H2O = beta-nicotinamide D-ribonucleotide + AMP + 2 H(+). The enzyme catalyses NADH + H2O = reduced beta-nicotinamide D-ribonucleotide + AMP + 2 H(+). In terms of biological role, mRNA decapping enzyme that specifically removes the nicotinamide adenine dinucleotide (NAD) cap from a subset of mRNAs by hydrolyzing the diphosphate linkage to produce nicotinamide mononucleotide (NMN) and 5' monophosphate mRNA. The NAD-cap is present at the 5'-end of some mRNAs and stabilizes RNA against 5'-processing. Has preference for mRNAs with a 5'-end purine. Catalyzes the hydrolysis of a broad range of dinucleotide pyrophosphates. The protein is NAD-capped RNA hydrolase NudC of Pseudomonas aeruginosa (strain ATCC 15692 / DSM 22644 / CIP 104116 / JCM 14847 / LMG 12228 / 1C / PRS 101 / PAO1).